The following is a 472-amino-acid chain: MAATLTGSGIALGFSCSAKFSKRASSSSNRRCIKMSVSVEEKTKKFTLQKSEEAFNAAKNLMPGGVNSPVRAFKSVGGQPVVMDSAKGSRIRDIDGNEYIDYVGSWGPAIIGHADDEVLAALAETMKKGTSFGAPCLLENVLAEMVISAVPSIEMVRFVNSGTEACMGVLRLARAFTGKQKFIKFEGCYHGHANSFLVKAGSGVATLGLPDSPGVPKAATSDTLTAPYNDIAAVEKLFEANKGEIAAIILEPVVGNSGFITPKPEFIEGIRRITKDNGALLIFDEVMTGFRLAYGGAQEYFGITPDLTTLGKIIGGGLPVGAYGGRRDIMEMVAPAGPMYQAGTLSGNPLAMTAGIHTLKRLSQPGTYEYLDKITKELTNGILEAGKKTGHAMCGGYISGMFGFFFTEGPVYDFSDAKKSDTEKFGKFFRGMLEEGVYLAPSQFEAGFTSLAHTSEDIQFTIAAAEKVLSRL.

A chloroplast-targeting transit peptide spans 1–36 (MAATLTGSGIALGFSCSAKFSKRASSSSNRRCIKMS). N6-(pyridoxal phosphate)lysine is present on Lys312.

Belongs to the class-III pyridoxal-phosphate-dependent aminotransferase family. HemL subfamily. As to quaternary structure, homodimer. Pyridoxal 5'-phosphate is required as a cofactor. Expressed in leaf primordia and shoot apical meristems (SAM).

It localises to the plastid. The protein localises to the chloroplast. It carries out the reaction (S)-4-amino-5-oxopentanoate = 5-aminolevulinate. Its pathway is porphyrin-containing compound metabolism; protoporphyrin-IX biosynthesis; 5-aminolevulinate from L-glutamyl-tRNA(Glu): step 2/2. It functions in the pathway porphyrin-containing compound metabolism; chlorophyll biosynthesis. Transaminase converting glutamate 1-semialdehyde (GSA) to 5-aminolevulinate (ALA). Involved in the biosynthesis of tetrapyrroles. The chain is Glutamate-1-semialdehyde 2,1-aminomutase 2, chloroplastic from Arabidopsis thaliana (Mouse-ear cress).